A 597-amino-acid polypeptide reads, in one-letter code: Elongation factor 4 (597 aa).

The tr-type G domain occupies Lys-2–Glu-184. GTP-binding positions include Asp-14–Thr-19 and Asn-131–Asp-134.

The protein belongs to the TRAFAC class translation factor GTPase superfamily. Classic translation factor GTPase family. LepA subfamily.

The protein localises to the cell inner membrane. The catalysed reaction is GTP + H2O = GDP + phosphate + H(+). Functionally, required for accurate and efficient protein synthesis under certain stress conditions. May act as a fidelity factor of the translation reaction, by catalyzing a one-codon backward translocation of tRNAs on improperly translocated ribosomes. Back-translocation proceeds from a post-translocation (POST) complex to a pre-translocation (PRE) complex, thus giving elongation factor G a second chance to translocate the tRNAs correctly. Binds to ribosomes in a GTP-dependent manner. The polypeptide is Elongation factor 4 (Actinobacillus succinogenes (strain ATCC 55618 / DSM 22257 / CCUG 43843 / 130Z)).